Consider the following 156-residue polypeptide: DNA gyrase inhibitor (156 aa).

It belongs to the DNA gyrase inhibitor family. As to quaternary structure, interacts with DNA gyrase.

The protein resides in the cytoplasm. Its function is as follows. Inhibits the supercoiling activity of DNA gyrase. Acts by inhibiting DNA gyrase at an early step, prior to (or at the step of) binding of DNA by the gyrase. It protects cells against toxins that target DNA gyrase, by inhibiting activity of these toxins and reducing the formation of lethal double-strand breaks in the cell. This is DNA gyrase inhibitor from Serratia proteamaculans (strain 568).